The sequence spans 563 residues: 5-aminolevulinate synthase, mitochondrial (563 aa).

Residues 1–18 (MESLVRQSKKLCPYIGRT) constitute a mitochondrion transit peptide. Positions 137, 251, and 270 each coordinate substrate. The pyridoxal 5'-phosphate site is built by Ser303, His331, and Thr373. Lys376 is a catalytic residue. Lys376 is modified (N6-(pyridoxal phosphate)lysine). Residues Thr405 and Thr406 each contribute to the pyridoxal 5'-phosphate site. Residue Thr491 coordinates substrate.

This sequence belongs to the class-II pyridoxal-phosphate-dependent aminotransferase family. In terms of assembly, homodimer. The cofactor is pyridoxal 5'-phosphate.

The protein localises to the mitochondrion matrix. The catalysed reaction is succinyl-CoA + glycine + H(+) = 5-aminolevulinate + CO2 + CoA. It functions in the pathway porphyrin-containing compound metabolism; protoporphyrin-IX biosynthesis; 5-aminolevulinate from glycine: step 1/1. In terms of biological role, catalyzes the synthesis of 5-aminolevulinate (ALA) from succinyl-CoA and glycine, the first and rate-limiting step in heme biosynthesis. The polypeptide is 5-aminolevulinate synthase, mitochondrial (HEM1) (Yarrowia lipolytica (strain CLIB 122 / E 150) (Yeast)).